Here is a 467-residue protein sequence, read N- to C-terminus: Glutamate--tRNA ligase (467 aa).

Positions 9-19 (PSPTGFLHIGG) match the 'HIGH' region motif. Residues 241-245 (KLSKR) carry the 'KMSKS' region motif. Lys-244 contributes to the ATP binding site.

It belongs to the class-I aminoacyl-tRNA synthetase family. Glutamate--tRNA ligase type 1 subfamily. In terms of assembly, monomer.

The protein localises to the cytoplasm. The catalysed reaction is tRNA(Glu) + L-glutamate + ATP = L-glutamyl-tRNA(Glu) + AMP + diphosphate. Catalyzes the attachment of glutamate to tRNA(Glu) in a two-step reaction: glutamate is first activated by ATP to form Glu-AMP and then transferred to the acceptor end of tRNA(Glu). In Methylobacillus flagellatus (strain ATCC 51484 / DSM 6875 / VKM B-1610 / KT), this protein is Glutamate--tRNA ligase.